The chain runs to 501 residues: Eukaryotic translation initiation factor 3 subunit E (501 aa).

Positions 245–423 constitute a PCI domain; it reads CDLFFYTPYL…ESIESTSTNV (179 aa). A phosphoserine mark is found at Ser-477 and Ser-479.

Belongs to the eIF-3 subunit E family. In terms of assembly, component of the eukaryotic translation initiation factor 3 (eIF-3) complex. The eIF-3 complex appears to include tif32/eif3a, SPAC25G10.08/eif3b, tif33/eif3c, SPBC4C3.07/eif3f, tif35/eif3g and sum1/eif3i. This set of common subunits may also associate exclusively with either moe1/eif3d and int6/eif3e, or with SPAC821.05/eif3h and SPAC1751.03/eif3m. The eIF-3 complex may also include SPAC3A12.13c/eif3j. Also interacts with the proteasome via rpn501/rpn502.

The protein resides in the cytoplasm. Component of the eukaryotic translation initiation factor 3 (eIF-3) complex, which is involved in protein synthesis of a specialized repertoire of mRNAs and, together with other initiation factors, stimulates binding of mRNA and methionyl-tRNAi to the 40S ribosome. The eIF-3 complex specifically targets and initiates translation of a subset of mRNAs involved in cell proliferation (Potential). Required for maintaining the basal level of atf1 and for transcriptional activation of core environmental stress response genes (CESR genes) in response to histidine starvation. May positively regulate proteasome activity. Required for nuclear localization of the proteasome subunit rpn501/rpn502. The protein is Eukaryotic translation initiation factor 3 subunit E (int6) of Schizosaccharomyces pombe (strain 972 / ATCC 24843) (Fission yeast).